Reading from the N-terminus, the 168-residue chain is RNA annealing protein YRA2 (168 aa).

An RRM domain is found at 40-114 (FRLKITNIGL…KSIQVTLLDQ (75 aa)). The segment at 113-152 (DQQKRKRDADQERRKLRHGPRGGYGSHYTKSQKPIEQRNK) is disordered.

Belongs to the YRA1 family. Associates with mRNPs.

It is found in the nucleus. In terms of biological role, involved in export of poly(A) mRNAs from the nucleus. Recruited to the coding sequences as well as poly-A sites of active genes. This is RNA annealing protein YRA2 (YRA2) from Candida glabrata (strain ATCC 2001 / BCRC 20586 / JCM 3761 / NBRC 0622 / NRRL Y-65 / CBS 138) (Yeast).